We begin with the raw amino-acid sequence, 101 residues long: Small ribosomal subunit protein uS14 (101 aa).

The protein belongs to the universal ribosomal protein uS14 family. As to quaternary structure, part of the 30S ribosomal subunit. Contacts proteins S3 and S10.

Functionally, binds 16S rRNA, required for the assembly of 30S particles and may also be responsible for determining the conformation of the 16S rRNA at the A site. The sequence is that of Small ribosomal subunit protein uS14 from Chlamydia trachomatis serovar L2 (strain ATCC VR-902B / DSM 19102 / 434/Bu).